Here is a 440-residue protein sequence, read N- to C-terminus: Thymidine phosphorylase (440 aa).

The protein belongs to the thymidine/pyrimidine-nucleoside phosphorylase family. As to quaternary structure, homodimer.

The catalysed reaction is thymidine + phosphate = 2-deoxy-alpha-D-ribose 1-phosphate + thymine. The protein operates within pyrimidine metabolism; dTMP biosynthesis via salvage pathway; dTMP from thymine: step 1/2. Functionally, the enzymes which catalyze the reversible phosphorolysis of pyrimidine nucleosides are involved in the degradation of these compounds and in their utilization as carbon and energy sources, or in the rescue of pyrimidine bases for nucleotide synthesis. This Yersinia pseudotuberculosis serotype O:1b (strain IP 31758) protein is Thymidine phosphorylase.